The following is a 405-amino-acid chain: Na(+)-translocating NADH-quinone reductase subunit F (405 aa).

Residues 3 to 23 (IILGIVMFTVIVLVLALMILF) traverse the membrane as a helical segment. The 93-residue stretch at 32–124 (GDITIKVNGE…DMDIEVPEEV (93 aa)) folds into the 2Fe-2S ferredoxin-type domain. Residues C67, C73, C76, and C108 each contribute to the [2Fe-2S] cluster site. The region spanning 127–267 (VKKWECTVIS…SGPFGEFFAK (141 aa)) is the FAD-binding FR-type domain. The tract at residues 270 to 387 (DAEMVFIGGG…PIMNQSVIKM (118 aa)) is catalytic.

The protein belongs to the NqrF family. Composed of six subunits; NqrA, NqrB, NqrC, NqrD, NqrE and NqrF. [2Fe-2S] cluster is required as a cofactor. It depends on FAD as a cofactor.

The protein resides in the cell inner membrane. The catalysed reaction is a ubiquinone + n Na(+)(in) + NADH + H(+) = a ubiquinol + n Na(+)(out) + NAD(+). Functionally, NQR complex catalyzes the reduction of ubiquinone-1 to ubiquinol by two successive reactions, coupled with the transport of Na(+) ions from the cytoplasm to the periplasm. The first step is catalyzed by NqrF, which accepts electrons from NADH and reduces ubiquinone-1 to ubisemiquinone by a one-electron transfer pathway. This chain is Na(+)-translocating NADH-quinone reductase subunit F, found in Neisseria meningitidis serogroup B (strain ATCC BAA-335 / MC58).